Consider the following 109-residue polypeptide: Sperm-specific class P protein 10 (109 aa).

Residues 2-109 (SLTADPPACT…TVTIPMSATA (108 aa)) enclose the MSP domain.

Expressed at higher level in testis.

This chain is Sperm-specific class P protein 10 (ssp-10), found in Caenorhabditis elegans.